The sequence spans 208 residues: Outer-membrane lipoprotein carrier protein (208 aa).

An N-terminal signal peptide occupies residues 1–25 (MKKLFSAKLFSALVLSFSLFSTAHA).

Belongs to the LolA family. As to quaternary structure, monomer.

It localises to the periplasm. In terms of biological role, participates in the translocation of lipoproteins from the inner membrane to the outer membrane. Only forms a complex with a lipoprotein if the residue after the N-terminal Cys is not an aspartate (The Asp acts as a targeting signal to indicate that the lipoprotein should stay in the inner membrane). The protein is Outer-membrane lipoprotein carrier protein of Vibrio campbellii (strain ATCC BAA-1116).